A 748-amino-acid polypeptide reads, in one-letter code: CCR4-NOT transcription complex subunit 10-B (748 aa).

Basic and acidic residues predominate over residues 1–16; sequence MAADKAGEQGAEKHEG. Disordered regions lie at residues 1 to 25, 483 to 524, and 605 to 634; these read MAADKAGEQGAEKHEGSANCSGISD, KQEN…PPSS, and VSLGVSSNEQEQGSDKGENEPMESAGKQIP. Composition is skewed to polar residues over residues 487–509 and 605–615; these read GSKASSQTVNTDSSGESSDVCSN and VSLGVSSNEQE.

It belongs to the CNOT10 family. In terms of assembly, component of the CCR4-NOT complex. cnot10 and cnot11 form a subcomplex docked to the cnot1 scaffold.

It localises to the cytoplasm. The protein localises to the nucleus. Its function is as follows. Component of the CCR4-NOT complex which is one of the major cellular mRNA deadenylases and is linked to various cellular processes including bulk mRNA degradation, miRNA-mediated repression, translational repression during translational initiation and general transcription regulation. Additional complex functions may be a consequence of its influence on mRNA expression. Is not required for association of CNOT7 to the CCR4-NOT complex. This chain is CCR4-NOT transcription complex subunit 10-B (cnot10-b), found in Xenopus laevis (African clawed frog).